The sequence spans 620 residues: UDP-glucose:protein N-beta-glucosyltransferase (620 aa).

This sequence belongs to the glycosyltransferase 41 family. Requires Does not require a metal cofactor. as cofactor.

The protein resides in the cytoplasm. It catalyses the reaction L-asparaginyl-[protein] + UDP-alpha-D-glucose = N(4)-(beta-D-glucosyl)-L-asparaginyl-[protein] + UDP + H(+). Its pathway is protein modification; protein glycosylation. Its function is as follows. Inverting glycosyltransferase that catalyzes the transfer of one glucose moiety from UDP-glucose to an asparagine residue in peptides and proteins containing the NX(S/T) motif, resulting in their modification with a beta-linked 1,N-glucose. Likely acts as a key component of a general protein glycosylation system. Also accepts UDP-galactose as a substrate donor, albeit with low efficiency. Cannot use UDP-GlcNAc or UDP-GalNAc as substrate donor. The polypeptide is UDP-glucose:protein N-beta-glucosyltransferase (Actinobacillus pleuropneumoniae serotype 7 (strain AP76)).